The sequence spans 285 residues: 4-hydroxybenzoate octaprenyltransferase (285 aa).

The next 7 helical transmembrane spans lie at 33–53, 93–113, 134–154, 166–186, 209–229, 233–253, and 265–285; these read FLAA…LGVV, LILF…MNTL, ITYL…PMAY, WLLF…YAMV, LMIG…GIQL, SLYN…QWLI, and FLNN…SVLI.

The protein belongs to the UbiA prenyltransferase family. It depends on Mg(2+) as a cofactor.

It is found in the cell inner membrane. It carries out the reaction all-trans-octaprenyl diphosphate + 4-hydroxybenzoate = 4-hydroxy-3-(all-trans-octaprenyl)benzoate + diphosphate. The protein operates within cofactor biosynthesis; ubiquinone biosynthesis. Functionally, catalyzes the prenylation of para-hydroxybenzoate (PHB) with an all-trans polyprenyl group. Mediates the second step in the final reaction sequence of ubiquinone-8 (UQ-8) biosynthesis, which is the condensation of the polyisoprenoid side chain with PHB, generating the first membrane-bound Q intermediate 3-octaprenyl-4-hydroxybenzoate. This Aliivibrio salmonicida (strain LFI1238) (Vibrio salmonicida (strain LFI1238)) protein is 4-hydroxybenzoate octaprenyltransferase.